Reading from the N-terminus, the 469-residue chain is Glutamate--tRNA ligase (469 aa).

The 'HIGH' region signature appears at 12-22; it reads PSPTGFIHLGN. The 'KMSKS' region signature appears at 244 to 248; that stretch reads KMSKR. Residue Lys-247 coordinates ATP.

It belongs to the class-I aminoacyl-tRNA synthetase family. Glutamate--tRNA ligase type 1 subfamily. Monomer.

It is found in the cytoplasm. It catalyses the reaction tRNA(Glu) + L-glutamate + ATP = L-glutamyl-tRNA(Glu) + AMP + diphosphate. Catalyzes the attachment of glutamate to tRNA(Glu) in a two-step reaction: glutamate is first activated by ATP to form Glu-AMP and then transferred to the acceptor end of tRNA(Glu). In Acidovorax sp. (strain JS42), this protein is Glutamate--tRNA ligase.